We begin with the raw amino-acid sequence, 1699 residues long: Genome polyprotein (1699 aa).

Residues methionine 1–aspartate 19 are compositionally biased toward low complexity. The disordered stretch occupies residues methionine 1–glutamate 78. The tract at residues methionine 1 to arginine 116 is interaction with host MAP1LC3A/LC3. The span at glutamine 46–asparagine 74 shows a compositional bias: pro residues. The tract at residues glutamate 117–glutamine 330 is interaction with NTPase. The segment at arginine 233–glutamine 330 is interaction with NS4. Host ER membrane association regions lie at residues lysine 250 to asparagine 281 and threonine 292 to glutamine 330. Residues glycine 331–alanine 509 form an interaction with NS1-2, NS4 and homooligomerization region. An SF3 helicase domain is found at leucine 465–glutamine 632. Glycine 495–threonine 502 provides a ligand contact to ATP. The tract at residues alanine 586–aspartate 691 is important for mitochondrion targeting. Residues tyrosine 764–glycine 770 form a functions as endoplasmic reticulum export signal region. The segment at arginine 801–threonine 850 is host membrane association. The disordered stretch occupies residues glutamine 843 to serine 894. Basic and acidic residues predominate over residues threonine 850–aspartate 861. The segment covering glycine 879–threonine 890 has biased composition (basic residues). Residues aspartate 899–glutamate 904 form an acidic region. At tyrosine 902 the chain carries O-(5'-phospho-RNA)-tyrosine. The segment at tryptophan 992–glutamate 1008 is interaction with host EIF4G. Residues alanine 1009–glutamate 1189 form the Peptidase C37 domain. Catalysis depends on for 3CLpro activity residues histidine 1038, glutamate 1062, and cysteine 1147. The RdRp catalytic domain maps to lysine 1425 to lysine 1546. 4 residues coordinate Mg(2+): aspartate 1429, aspartate 1431, aspartate 1533, and glutamate 1534.

As to quaternary structure, homodimer. Homooligomer. Interacts with NTPase; this interaction increases the proapoptotic activity of the NTPase and is crucial for the formation of the viral replication complex. Interacts with NS4; this interaction is crucial for the formation of the viral replication complex. Interacts (via N-terminus) with host VAPA. Interacts with host MAP1LC3A/LC3; this interaction does not seem to be linked to host autophagy, but rather plays a role in the formation of viral factories. In terms of assembly, homooligomer. Interacts with NS1-2; this interaction increases the proapoptotic activity of the NTPase and is crucial for the formation of the viral replication complex. Interacts with NS4; this interaction increases the proapoptotic activity of the NTPase. Homodimer. Monomer; in solution. As to quaternary structure, interacts with NTPase; this interaction increases the proapoptotic activity of the NTPase. Interacts with NS1-2; this interaction is crucial for the formation of the viral replication complex. In terms of assembly, monomer. Interacts with the RNA-directed RNA polymerase; this interaction induces the multimerization of the RdRp and enhances its activity. Interacts with host IEF4G1; this interaction plays a role in translation of viral proteins. Homohexamer; also forms fibrous hexameric oligomer. Interacts with the viral genome-linked protein; this interaction induces the multimerization of the RdRp and enhances its activity. Mg(2+) serves as cofactor. Requires Mn(2+) as cofactor. In terms of processing, specific enzymatic cleavages in vivo yield mature proteins. 3CLpro is first autocatalytically cleaved, then processes the whole polyprotein. NS1/2-3 and NS3-4 sites are cleaved rapidly and NS4-5, NS5-6, and NS6-7 sites are processed subsequently and less efficiently. Post-translationally, VPg is uridylylated by the polymerase and is covalently attached to the 5'-end of the polyadenylated genomic and subgenomic RNAs. This uridylylated form acts as a nucleotide-peptide primer for the polymerase. Cleaved by host CASP3/caspase 3 at 18-22 h.p.i. The cleavage allows NS1 secretion, which is essential for intestinal infection and resistance to IFN-lambda.

Its subcellular location is the host endoplasmic reticulum membrane. The protein localises to the secreted. It is found in the host mitochondrion. The protein resides in the host Golgi apparatus membrane. It localises to the host cytoplasm. Its subcellular location is the host perinuclear region. It carries out the reaction a ribonucleoside 5'-triphosphate + H2O = a ribonucleoside 5'-diphosphate + phosphate + H(+). It catalyses the reaction Endopeptidase with a preference for cleavage when the P1 position is occupied by Glu-|-Xaa and the P1' position is occupied by Gly-|-Yaa.. The catalysed reaction is RNA(n) + a ribonucleoside 5'-triphosphate = RNA(n+1) + diphosphate. In terms of biological role, induces the proliferation of the host smooth ER membranes forming long tubular structures. These remodeled membranes probably form the viral factories that contain the replication complex. May play a role in viral replication by interacting with host VAPA, a vesicle-associated membrane protein that plays a role in SNARE-mediated vesicle fusion. This interaction may target replication complex to intracellular membranes. Functionally, displays NTPase activity, but no helicase activity. Displays RNA chaperone-like activity and destabilizes dsRNA. Induces the formation of convoluted membranes derived from the host ER. These remodeled membranes probably form the viral factories that contain the replication complex. Initiates host cell death by targeting the mitochondrial outer membrane, leading to the permeabilization of mitochondria, programmed host cell death and viral egress. Externalization of host cardiolipin seems to be involved in the process. Probably plays a role in preventing the assembly of host stress granules. Probable key protein responsible for the formation of membrane alterations by the virus. Induces the formation of convoluted membranes derived from the host ER. These remodeled membranes probably form the viral factories that contain the replication complex. May play a role in targeting replication complex to intracellular membranes. Its function is as follows. Viral genome-linked protein is covalently linked to the 5'-end of the positive-strand, negative-strand genomic RNAs and subgenomic RNA. Acts as a genome-linked replication primer. May recruit ribosome to viral RNA thereby promoting viral proteins translation. Interacts with host translation initiation complex to allow the translation of viral proteins. Induces the formation of aggregates of RNA-directed RNA polymerase in the presence of RNA. Through its interaction with the viral RNA-directed RNA polymerase, plays a crucial role in enhancing the polymerase activity. In terms of biological role, processes the polyprotein. 3CLpro-RdRp is first released by autocleavage, then all other proteins are cleaved. May cleave polyadenylate-binding protein thereby inhibiting cellular translation. Functionally, replicates genomic and antigenomic RNA by recognizing replications specific signals. Also transcribes a subgenomic mRNA by initiating RNA synthesis internally on antigenomic RNA. This sgRNA codes for structural proteins. Catalyzes the covalent attachment VPg with viral RNAs. This Lordsdale virus (strain GII/Human/United Kingdom/Lordsdale/1993) (Human enteric calicivirus) protein is Genome polyprotein.